Consider the following 298-residue polypeptide: Probable 3-hydroxyacyl-CoA dehydrogenase F54C8.1 (298 aa).

It belongs to the 3-hydroxyacyl-CoA dehydrogenase family. Homodimer.

It localises to the mitochondrion matrix. The catalysed reaction is a (3S)-3-hydroxyacyl-CoA + NAD(+) = a 3-oxoacyl-CoA + NADH + H(+). It participates in lipid metabolism; fatty acid beta-oxidation. This chain is Probable 3-hydroxyacyl-CoA dehydrogenase F54C8.1, found in Caenorhabditis elegans.